The chain runs to 346 residues: NADH-ubiquinone oxidoreductase chain 2 (346 aa).

9 consecutive transmembrane segments (helical) span residues 7–27 (AIIT…NHWI), 59–79 (YFLT…MNMW), 93–115 (ISCT…HFWF), 151–171 (TTLL…GGLN), 178–198 (IMAF…TLSP), 200–220 (ILLL…LMIN), 242–262 (TMML…GFAP), 275–294 (LSMF…YFYL), and 325–345 (LATI…LKAI).

The protein belongs to the complex I subunit 2 family.

The protein localises to the mitochondrion inner membrane. It carries out the reaction a ubiquinone + NADH + 5 H(+)(in) = a ubiquinol + NAD(+) + 4 H(+)(out). In terms of biological role, core subunit of the mitochondrial membrane respiratory chain NADH dehydrogenase (Complex I) that is believed to belong to the minimal assembly required for catalysis. Complex I functions in the transfer of electrons from NADH to the respiratory chain. The immediate electron acceptor for the enzyme is believed to be ubiquinone. The polypeptide is NADH-ubiquinone oxidoreductase chain 2 (MT-ND2) (Pelomedusa subrufa (African side-necked turtle)).